The following is a 263-amino-acid chain: Lens fiber major intrinsic protein (263 aa).

Residues 1-9 lie on the Cytoplasmic side of the membrane; sequence MWELRSASF. Residues 10–29 traverse the membrane as a helical segment; that stretch reads WRAIFAEFFATLFYVFFGLG. At 30–41 the chain is on the extracellular side; it reads SSLRWAPGPLHV. Residues 42–59 form a helical membrane-spanning segment; it reads LQVALAFGLALATLVQTV. Residues 60–61 lie on the Cytoplasmic side of the membrane; it reads GH. Residues 62–77 constitute an intramembrane region (discontinuously helical); that stretch reads ISGAHVNPAVTFAFLV. The NPA 1 motif lies at 68–70; that stretch reads NPA. Residues 78–82 lie on the Cytoplasmic side of the membrane; it reads GSQMS. Residues 83-106 form a helical membrane-spanning segment; that stretch reads LLRAFCYIAAQLLGAVAGAAVLYS. The Extracellular segment spans residues 107 to 127; sequence VTPPAVRGNLALNTLHAGVSV. A helical membrane pass occupies residues 128–148; sequence GQATTVEIFLTLQFVLCIFAT. The Cytoplasmic segment spans residues 149–156; the sequence is YDERRNGR. Residues 157–175 traverse the membrane as a helical segment; that stretch reads MGSVALAVGFSLTLGHLFG. Residues 176–178 are Extracellular-facing; sequence MYY. Positions 179-193 form an intramembrane region, discontinuously helical; that stretch reads TGAGMNPARSFAPAI. The NPA 2 motif lies at 184-186; it reads NPA. Over 194 to 200 the chain is Extracellular; it reads LTRNFSN. A helical transmembrane segment spans residues 201-222; the sequence is HWVYWVGPIIGGGLGSLLYDFL. Residues 223–263 are Cytoplasmic-facing; it reads LFPRLKSVSERLSILKGARPSDSNGQPEGTGEPVELKTQAL. An interaction with CALM region spans residues 227–237; sequence LKSVSERLSIL. 3 positions are modified to phosphoserine: serine 235, serine 243, and serine 245. Residues 240–263 form a disordered region; that stretch reads ARPSDSNGQPEGTGEPVELKTQAL. Residue asparagine 246 is modified to Deamidated asparagine.

The protein belongs to the MIP/aquaporin (TC 1.A.8) family. As to quaternary structure, homotetramer; each monomer provides an independent water pore. Two homotetramers on opposing membranes can dimerize, forming a cell-cell junction. Interacts with CALM; the calcium-calmodulin/CALM complex interacts with the cytoplasmic domains of two aquaporins, leading to channel closure. Interacts with BFSP1 (via C-terminus); prevents calcium-dependent inhibition of the water channel activity. In terms of processing, subject to partial proteolytic cleavage in the eye lens core. Partial proteolysis promotes interactions between tetramers from adjoining membranes. Fatty acylated at Met-1 and Lys-238. The acyl modifications, in decreasing order of ion abundance, are: oleoyl (C18:1) &gt; palmitoyl (C16:0) &gt; stearoyl (C18:0) &gt; eicosenoyl (C20:1) &gt; dihomo-gamma-linolenoyl (C20:3) &gt; palmitoleoyl (C16:1) &gt; eicosadienoyl (C20:2).

The protein resides in the cell membrane. The protein localises to the cell junction. It carries out the reaction H2O(in) = H2O(out). Its activity is regulated as follows. The water channel activity is inhibited by calcium through calmodulin/CALM. In terms of biological role, aquaporins form homotetrameric transmembrane channels, with each monomer independently mediating water transport across the plasma membrane along its osmotic gradient. Specifically expressed in lens fiber cells, this aquaporin is crucial for maintaining lens water homeostasis and transparency. Beyond water permeability, it also acts as a cell-to-cell adhesion molecule, forming thin junctions between lens fiber cells that are essential for maintaining the ordered structure and transparency of the lens. This Rattus norvegicus (Rat) protein is Lens fiber major intrinsic protein.